We begin with the raw amino-acid sequence, 128 residues long: Small ribosomal subunit protein eS8 (128 aa).

This sequence belongs to the eukaryotic ribosomal protein eS8 family. In terms of assembly, part of the 30S ribosomal subunit.

This is Small ribosomal subunit protein eS8 from Methanococcus maripaludis (strain C7 / ATCC BAA-1331).